Here is a 151-residue protein sequence, read N- to C-terminus: Ribosome maturation factor RimP (151 aa).

Belongs to the RimP family.

It localises to the cytoplasm. Functionally, required for maturation of 30S ribosomal subunits. This chain is Ribosome maturation factor RimP, found in Vibrio campbellii (strain ATCC BAA-1116).